A 361-amino-acid polypeptide reads, in one-letter code: MTRAFNFSAGPATLPESVLRQAQEEMVEWNGVGASIVEISHRSADFMAVAAAAEADLRTLLSIPDDYAVLFTSGGATTIQALLPLNFAAPGQAVDYVVSGHWGKTAIKQATPYVDVRVAADGQPGGYVDIPPVASWTLSPHAAYVHITANETIHGVEFRDTPDVGTLPLFADFSSSIASEPLDIRRYGLIYAGAQKNLGPVGISVVIVRRELLERAGQPRADIFNYASHVARDSMLNTPPTWNWYLLGLTVKWMLEQGGVAAFAQRNAEKAALVYGAIDGSGGFYRNQVMPTVRSRMNIPFFLGDEQLDALFVSESKAAGLLALKGHKAVGGIRASLYNAMPVAGAQALVAFMHDFQQRHG.

Arginine 42 provides a ligand contact to L-glutamate. Pyridoxal 5'-phosphate contacts are provided by residues 76–77 (AT), tryptophan 102, threonine 152, aspartate 172, and glutamine 195. N6-(pyridoxal phosphate)lysine is present on lysine 196. 237 to 238 (NT) serves as a coordination point for pyridoxal 5'-phosphate.

Belongs to the class-V pyridoxal-phosphate-dependent aminotransferase family. SerC subfamily. Homodimer. Pyridoxal 5'-phosphate serves as cofactor.

The protein localises to the cytoplasm. The enzyme catalyses O-phospho-L-serine + 2-oxoglutarate = 3-phosphooxypyruvate + L-glutamate. It catalyses the reaction 4-(phosphooxy)-L-threonine + 2-oxoglutarate = (R)-3-hydroxy-2-oxo-4-phosphooxybutanoate + L-glutamate. It functions in the pathway amino-acid biosynthesis; L-serine biosynthesis; L-serine from 3-phospho-D-glycerate: step 2/3. The protein operates within cofactor biosynthesis; pyridoxine 5'-phosphate biosynthesis; pyridoxine 5'-phosphate from D-erythrose 4-phosphate: step 3/5. Catalyzes the reversible conversion of 3-phosphohydroxypyruvate to phosphoserine and of 3-hydroxy-2-oxo-4-phosphonooxybutanoate to phosphohydroxythreonine. The sequence is that of Phosphoserine aminotransferase from Xanthomonas campestris pv. campestris (strain 8004).